Reading from the N-terminus, the 590-residue chain is MIKMRVRFPTLVLLLGIVFLMAVSIGIAYGEKNVIKNHERPQEREQEERDPRQQPRPHHQEEQEREHRREEERDREPSRGRSESEESREEEREQRREPRREREQEQQPQHGRREEEEEWQPRRQRPQSRREEREQEQGSSSSSRRQSGYERREEREQEQEQGSRSDSRRQRNPYYFSSERFQTLYRNRNGQIRVLERFDQRTDRLENLQNYRIVEFQSKPNTLILPKHSDADYILVVLNGSATITIVNPDKRQSYNLENGDALRLPAGTTSYILNPDDNQNLRVVKLAIPINNPGNFYDFYPSSSKDQQSYFSGFSRNTLEATFNTRYEEIQRILLGNEDEQEDDEQRHGQEQSHQDEGVIVRVSKEQVQELRKYAQSSSRKGKPSKSGPFNLRSNKPIYSNKFGNFYEITPNRNPQAQDLDISLTFIEINEGALLLPHYNSKAIFVVLVDEGEGNYELVGIRDQQRQQDEQEVRRYSARLSEGDIFVIPAGHPISINASSNLRLLGFGINADENQRNFLAGSEDNVIRQLDTEVKGLTFPGSTEDVERLIKNQQQSYFANAQPQQQQQREREGRRGRRGHISSILSTLY.

The N-terminal stretch at 1 to 30 (MIKMRVRFPTLVLLLGIVFLMAVSIGIAYG) is a signal peptide. Residues 38-105 (HERPQEREQE…REPRREREQE (68 aa)) are compositionally biased toward basic and acidic residues. The interval 38 to 175 (HERPQEREQE…DSRRQRNPYY (138 aa)) is disordered. Residues 137 to 146 (QGSSSSSRRQ) show a composition bias toward low complexity. The Cupin type-1 1 domain occupies 174 to 332 (YYFSSERFQT…TFNTRYEEIQ (159 aa)). The N-linked (GlcNAc...) asparagine glycan is linked to Asn239. 2 disordered regions span residues 340 to 362 (DEQE…GVIV) and 374 to 396 (KYAQ…LRSN). Positions 346–362 (EQRHGQEQSHQDEGVIV) are enriched in basic and acidic residues. The Cupin type-1 2 domain maps to 391–548 (FNLRSNKPIY…TFPGSTEDVE (158 aa)). Asn498 carries an N-linked (GlcNAc...) asparagine glycan. The tract at residues 559-579 (FANAQPQQQQQREREGRRGRR) is disordered.

This sequence belongs to the 7S seed storage protein family. As to quaternary structure, component of globulins complexes which accumulate in seeds.

Functionally, seed storage protein. Accumulates during seed development and is hydrolyzed after germination to provide a carbon and nitrogen source for the developing seedling. This is Conglutin beta 4 from Lupinus angustifolius (Narrow-leaved blue lupine).